Here is a 128-residue protein sequence, read N- to C-terminus: Ribonuclease pancreatic (128 aa).

The disordered stretch occupies residues 1-23 (AESSAMKFQRQHVDSEGSSSSNA). Residues Lys-7 and Arg-10 each coordinate substrate. His-12 (proton acceptor) is an active-site residue. Cystine bridges form between Cys-26-Cys-84, Cys-40-Cys-95, Cys-58-Cys-110, and Cys-65-Cys-72. Residues 41-45 (KPVNT), Lys-66, and Arg-85 each bind substrate. Residue His-119 is the Proton donor of the active site.

Belongs to the pancreatic ribonuclease family. Monomer. Interacts with and forms tight 1:1 complexes with RNH1. Dimerization of two such complexes may occur. Interaction with RNH1 inhibits this protein. As to expression, pancreas.

It localises to the secreted. It catalyses the reaction an [RNA] containing cytidine + H2O = an [RNA]-3'-cytidine-3'-phosphate + a 5'-hydroxy-ribonucleotide-3'-[RNA].. The catalysed reaction is an [RNA] containing uridine + H2O = an [RNA]-3'-uridine-3'-phosphate + a 5'-hydroxy-ribonucleotide-3'-[RNA].. Its function is as follows. Endonuclease that catalyzes the cleavage of RNA on the 3' side of pyrimidine nucleotides. Acts on single-stranded and double-stranded RNA. The chain is Ribonuclease pancreatic (RNASE1) from Hydrochoerus hydrochaeris (Capybara).